A 307-amino-acid chain; its full sequence is MVTTLDNALLEEILQQVRPLIGQGKVADYIPALAEVASDRLAIAVCTVDGEIFQAGNATERFSIQSISKVLSLTLALTRYQEHEIWQRVGKEPSGLPFNSLLQLEMEQGKPRNPFINPGALVVCDMLQTRLSAPKQRMLEVVRQLAGEEDLAYDSRVARSEFEHSDRNAAIAYLMKSFGNFENDVLTVLQTYFHYCALRMSCLELARSFVYLANHGRDLSGREVISPLQARQINALMMTSGMYDGAGEFAYRVGMPGKSGVGGGIVAIVPDELSIAVWSPELDASGNSLAGTAALELLSQRISRSIF.

Residues Ser66, Asn117, Glu161, Asn168, Tyr192, Tyr243, and Val261 each coordinate substrate.

It belongs to the glutaminase family. As to quaternary structure, homotetramer.

The catalysed reaction is L-glutamine + H2O = L-glutamate + NH4(+). This chain is Glutaminase, found in Serratia proteamaculans (strain 568).